A 339-amino-acid chain; its full sequence is Anthranilate phosphoribosyltransferase (339 aa).

Residues Gly-80, 83 to 84, Thr-88, 90 to 93, 108 to 116, and Ser-120 each bind 5-phospho-alpha-D-ribose 1-diphosphate; these read GD, NIST, and KHGNRSVSS. Gly-80 provides a ligand contact to anthranilate. Residue Ser-92 participates in Mg(2+) binding. An anthranilate-binding site is contributed by Asn-111. An anthranilate-binding site is contributed by Arg-166. Mg(2+)-binding residues include Asp-225 and Glu-226.

Belongs to the anthranilate phosphoribosyltransferase family. As to quaternary structure, homodimer. Mg(2+) is required as a cofactor.

The catalysed reaction is N-(5-phospho-beta-D-ribosyl)anthranilate + diphosphate = 5-phospho-alpha-D-ribose 1-diphosphate + anthranilate. Its pathway is amino-acid biosynthesis; L-tryptophan biosynthesis; L-tryptophan from chorismate: step 2/5. Catalyzes the transfer of the phosphoribosyl group of 5-phosphorylribose-1-pyrophosphate (PRPP) to anthranilate to yield N-(5'-phosphoribosyl)-anthranilate (PRA). This chain is Anthranilate phosphoribosyltransferase, found in Alkaliphilus metalliredigens (strain QYMF).